Reading from the N-terminus, the 130-residue chain is Large ribosomal subunit protein bL17 (130 aa).

It belongs to the bacterial ribosomal protein bL17 family. In terms of assembly, part of the 50S ribosomal subunit. Contacts protein L32.

This is Large ribosomal subunit protein bL17 from Photorhabdus laumondii subsp. laumondii (strain DSM 15139 / CIP 105565 / TT01) (Photorhabdus luminescens subsp. laumondii).